A 167-amino-acid polypeptide reads, in one-letter code: Caffeine dehydrogenase subunit gamma (167 aa).

The 2Fe-2S ferredoxin-type domain occupies 4 to 80 (HVISLTVNGQ…GHSIRTVEAL (77 aa)). The [2Fe-2S] cluster site is built by Cys42, Cys47, Cys50, and Cys62.

In terms of assembly, heterotrimer composed of an alpha (CdhA), a beta (CdhB) and a gamma (CdhC) subunit.

The catalysed reaction is caffeine + a ubiquinone + H2O = 1,3,7-trimethylurate + a ubiquinol. It catalyses the reaction ubiquinone-0 + caffeine + H2O = ubiquinol-0 + 1,3,7-trimethylurate. The enzyme catalyses theobromine + a ubiquinone + H2O = 3,7-dimethylurate + a ubiquinol. Functionally, component of the caffeine dehydrogenase complex that catalyzes the hydrolytical oxidation of 1,3,7-trimethylxanthine (caffeine) by incorporation of an oxygen atom originating from a water molecule into position C-8 to produce 1,3,7-trimethyluric acid (TMU). Coenzyme Q0 (ubiquinone-0) is the preferred electron acceptor and, to a lesser extent, coenzyme Q2 (ubiquinone-2) can also be used, but oxygen and NAD(P)(+) cannot. Is involved in a caffeine degradation pathway that allows Pseudomonas sp. strain CBB1 to grow on caffeine as the sole carbon and nitrogen source. Is also active with theobromine as substrate, but shows a very poor activity with theophylline and is not active with xanthine, 3-methylxanthine, 7-methylxanthine, TMU, and 3,7-dimethylurate. In Pseudomonas sp. (strain CBB1), this protein is Caffeine dehydrogenase subunit gamma.